A 384-amino-acid polypeptide reads, in one-letter code: S-adenosylmethionine synthase (384 aa).

Histidine 15 is an ATP binding site. Residue aspartate 17 participates in Mg(2+) binding. Glutamate 43 lines the K(+) pocket. Positions 56 and 99 each coordinate L-methionine. A flexible loop region spans residues 99–109 (QSPDINQGVDR). Residues 164–166 (DAK), 231–232 (RF), aspartate 240, 246–247 (RK), alanine 263, and lysine 267 contribute to the ATP site. Position 240 (aspartate 240) interacts with L-methionine. Residue lysine 271 coordinates L-methionine.

It belongs to the AdoMet synthase family. In terms of assembly, homotetramer; dimer of dimers. The cofactor is Mg(2+). It depends on K(+) as a cofactor.

It is found in the cytoplasm. It catalyses the reaction L-methionine + ATP + H2O = S-adenosyl-L-methionine + phosphate + diphosphate. The protein operates within amino-acid biosynthesis; S-adenosyl-L-methionine biosynthesis; S-adenosyl-L-methionine from L-methionine: step 1/1. In terms of biological role, catalyzes the formation of S-adenosylmethionine (AdoMet) from methionine and ATP. The overall synthetic reaction is composed of two sequential steps, AdoMet formation and the subsequent tripolyphosphate hydrolysis which occurs prior to release of AdoMet from the enzyme. The protein is S-adenosylmethionine synthase of Shewanella pealeana (strain ATCC 700345 / ANG-SQ1).